A 160-amino-acid chain; its full sequence is Transcription elongation factor GreA (160 aa).

Positions 1–72 (MAEKTYVMTL…QIQILETKIR (72 aa)) form a coiled coil.

This sequence belongs to the GreA/GreB family.

In terms of biological role, necessary for efficient RNA polymerase transcription elongation past template-encoded arresting sites. The arresting sites in DNA have the property of trapping a certain fraction of elongating RNA polymerases that pass through, resulting in locked ternary complexes. Cleavage of the nascent transcript by cleavage factors such as GreA or GreB allows the resumption of elongation from the new 3'terminus. GreA releases sequences of 2 to 3 nucleotides. This chain is Transcription elongation factor GreA, found in Streptococcus thermophilus (strain CNRZ 1066).